Reading from the N-terminus, the 251-residue chain is MLTRKQYLLLSFIDQRLKLSGVSPSFDEMKDALGLKSKSGIHRLIKGLEERGFLKRLPHRARALEVLRLPCNLTFDGDGEALDDGQPAPLFGGPLPETGFSPQVIRGNFTPTLPSTQVPQVLFTESISLPLLGKIAAGTPIAALIDPTSSIDVPASMVRGGEHFALRIEGDSMIEAGILSGDLAVVRRCDEAENGTVIVALVDNEEATLKRLRRKGASIALEPANRAFKTQIYGPDRVRIQGRLVGLIRSY.

The segment at residues F26–K46 is a DNA-binding region (H-T-H motif). Active-site for autocatalytic cleavage activity residues include S172 and K210.

The protein belongs to the peptidase S24 family. Homodimer.

It catalyses the reaction Hydrolysis of Ala-|-Gly bond in repressor LexA.. In terms of biological role, represses a number of genes involved in the response to DNA damage (SOS response), including recA and lexA. In the presence of single-stranded DNA, RecA interacts with LexA causing an autocatalytic cleavage which disrupts the DNA-binding part of LexA, leading to derepression of the SOS regulon and eventually DNA repair. The protein is LexA repressor of Rhodospirillum rubrum (strain ATCC 11170 / ATH 1.1.1 / DSM 467 / LMG 4362 / NCIMB 8255 / S1).